The chain runs to 87 residues: RNA-binding protein Hfq (87 aa).

The 60-residue stretch at 9 to 68 folds into the Sm domain; it reads DPFLNALRRERIPVSIYLVNGIKLQGQIESFDQFVILLKNTVSQMVYKHAISTVVPARAV.

It belongs to the Hfq family. Homohexamer.

In terms of biological role, RNA chaperone that binds small regulatory RNA (sRNAs) and mRNAs to facilitate mRNA translational regulation in response to envelope stress, environmental stress and changes in metabolite concentrations. Also binds with high specificity to tRNAs. In Aeromonas salmonicida (strain A449), this protein is RNA-binding protein Hfq.